Here is a 406-residue protein sequence, read N- to C-terminus: MAYVLVLNSGSSSVKFQLVDPESSATDTPLVSGLVEQVGEPQGAVTVKTGGEEFKEELEIPTHSFGLDRAFSIMHEHGVGPTDVEVIAVGHRVVHGGRLFSEPQLIVDQIESMIEDLIPLAPLHNPANLDGIRVARKLLPEIPHVAVFDTAFFNHMPPAAALYAINNDVASQYDIRRYGFHGTSHEFVSQQVPKLLDRDPGHVHQITLHLGNGASAAAIRNGRPIDTSMGLTPLAGLAMGTRSGDIDPGIIFHLSREAGMSIDEIDNLLNKRSGVKGIAGVNDFRVLRERINNEDQDAWLAYNIYIHQLRRFIGAYMIALGRVDAITFTAGVGENDTEVRQDSLYNLDMYGIDFDKEANLVRSKEPRMISTADSQVKVFVVPTNEELAIAQKSAGIAAMAREAGLY.

Mg(2+) is bound at residue Asn8. Lys15 provides a ligand contact to ATP. Arg92 is a substrate binding site. Asp149 functions as the Proton donor/acceptor in the catalytic mechanism. ATP contacts are provided by residues 209-213 (HLGNG), 283-285 (DFR), and 331-335 (GVGEN). A Mg(2+)-binding site is contributed by Glu385.

The protein belongs to the acetokinase family. As to quaternary structure, homodimer. Mg(2+) is required as a cofactor. The cofactor is Mn(2+).

It localises to the cytoplasm. The enzyme catalyses acetate + ATP = acetyl phosphate + ADP. The protein operates within metabolic intermediate biosynthesis; acetyl-CoA biosynthesis; acetyl-CoA from acetate: step 1/2. Functionally, catalyzes the formation of acetyl phosphate from acetate and ATP. Can also catalyze the reverse reaction. The polypeptide is Acetate kinase (Corynebacterium aurimucosum (strain ATCC 700975 / DSM 44827 / CIP 107346 / CN-1) (Corynebacterium nigricans)).